A 98-amino-acid chain; its full sequence is Large ribosomal subunit protein uL23 (98 aa).

The protein belongs to the universal ribosomal protein uL23 family. Part of the 50S ribosomal subunit. Contacts protein L29, and trigger factor when it is bound to the ribosome.

One of the early assembly proteins it binds 23S rRNA. One of the proteins that surrounds the polypeptide exit tunnel on the outside of the ribosome. Forms the main docking site for trigger factor binding to the ribosome. This Bordetella avium (strain 197N) protein is Large ribosomal subunit protein uL23.